The primary structure comprises 274 residues: Probable eukaryotic translation initiation factor 3 subunit J (274 aa).

Disordered stretches follow at residues 1 to 110 (MDSW…KEAM) and 207 to 245 (KEQQ…NVNS). Residues 38-47 (DEEDEDEEEN) show a composition bias toward acidic residues. The span at 52–73 (QNDSHSVSQKSSSSSQNDQGSN) shows a compositional bias: low complexity. Positions 82–110 (IQERNFEKAIKASEAAAKEESLESSKEAM) are enriched in basic and acidic residues. Residues 219–234 (AAAPAAKPVSTAAPSK) are compositionally biased toward low complexity.

The protein belongs to the eIF-3 subunit J family. In terms of assembly, component of the eukaryotic translation initiation factor 3 (eIF-3) complex. The eIF-3 complex appears to include tif32/eif3a, SPAC25G10.08/eif3b, tif33/eif3c, SPBC4C3.07/eif3f, tif35/eif3g and sum1/eif3i. This set of common subunits may also associate exclusively with either moe1/eif3d and int6/eif3e, or with SPAC821.05/eif3h and SPAC1751.03/eif3m. The eIF-3 complex may also include SPAC3A12.13c/eif3j. Interacts with sad1.

The protein localises to the cytoplasm. Its function is as follows. Component of the eukaryotic translation initiation factor 3 (eIF-3) complex, which is involved in protein synthesis of a specialized repertoire of mRNAs and, together with other initiation factors, stimulates binding of mRNA and methionyl-tRNAi to the 40S ribosome. The eIF-3 complex specifically targets and initiates translation of a subset of mRNAs involved in cell proliferation. The sequence is that of Probable eukaryotic translation initiation factor 3 subunit J from Schizosaccharomyces pombe (strain 972 / ATCC 24843) (Fission yeast).